Consider the following 122-residue polypeptide: UPF0231 protein VIBHAR_03438 (122 aa).

This sequence belongs to the UPF0231 family.

This chain is UPF0231 protein VIBHAR_03438, found in Vibrio campbellii (strain ATCC BAA-1116).